A 76-amino-acid polypeptide reads, in one-letter code: MDQLYMTVQDYLLKFRKISSLESLEKLFDHLNYTLTDDMDIVNMYRAADHRRAELVSGGRLFDVGQVPQSVWRYVQ.

It belongs to the Hha/YmoA/Cnu family.

Binds to H-NS and modifies the range of genes it silences; H-NS alone silences 'core' genes while the H-NS-Hha complex (and presumably also H-NS-YdgT) silences genes acquired by horizontal gene transfer. Plays a role silencing virulence factors in the absence of factors that induce pathogenicity. The polypeptide is Transcription modulator YdgT (ydgT) (Salmonella typhimurium (strain SL1344)).